Here is a 101-residue protein sequence, read N- to C-terminus: Small ribosomal subunit protein uS14 (101 aa).

Residues 1–10 (MAKKSSIEKN) are compositionally biased toward basic and acidic residues. The tract at residues 1–23 (MAKKSSIEKNNRRKRMVKNAAPK) is disordered.

The protein belongs to the universal ribosomal protein uS14 family. As to quaternary structure, part of the 30S ribosomal subunit. Contacts proteins S3 and S10.

In terms of biological role, binds 16S rRNA, required for the assembly of 30S particles and may also be responsible for determining the conformation of the 16S rRNA at the A site. The protein is Small ribosomal subunit protein uS14 of Bradyrhizobium diazoefficiens (strain JCM 10833 / BCRC 13528 / IAM 13628 / NBRC 14792 / USDA 110).